Here is a 184-residue protein sequence, read N- to C-terminus: Inactive cytochrome P450 monooxygenase lolP2 (184 aa).

A helical membrane pass occupies residues 10-30 (GIVWLTVAAIAISYILQSSFL). The interval 161 to 184 (RRTRGSRPRSRPRWMPARWSRSSP) is disordered. The segment covering 163–172 (TRGSRPRSRP) has biased composition (basic residues). A compositionally biased stretch (low complexity) spans 173–184 (RWMPARWSRSSP).

It belongs to the cytochrome P450 family.

The protein localises to the membrane. Its function is as follows. Cytochrome P450 monooxygenase; part of the gene cluster that mediates the biosynthesis of loline alkaloids, potent insecticidal agents composed of a pyrrolizidine ring system and an uncommon ether bridge linking carbons 2 and 7. Lolines are structurally differentiated by the various modifications of the L-amino group and include norloline, loline, N-methylloline, N-acetylloline, N-acetylnorloline, and N-formylloline. The first committed step is the condensation of O-acetyl-L-homoserine (derived from L-aspartic acid) and L-proline, probably catalyzed by the gamma-type pyridoxal 5'-phosphate(PLP)-dependent enzyme lolC, to give the diamino diacid, NACPP. Ensuing cyclization, decarboxylation, and acetylation steps yield 1-exo-acetamidopyrrolizidine (AcAP). LolO is required for installation of the ether bridge upon the pathway intermediate, 1-exo-acetamidopyrrolizidine (AcAP). In sequential 2-oxoglutarate- and O(2)-consuming steps, lolO removes hydrogens from C2 and C7 of AcAP to form both carbon-oxygen bonds in N-acetylnorloline (NANL), the precursor to all other lolines. The enzymes lolD, lolE, lolF and lolT have also been proposed to be involved in the ether-bridge installation. Further processing of the exocyclic moiety of NANL by fungal N-acetamidase (LolN), methyltransferase (LolM), and cytochrome P450 (LolP) enzymes, with occasional involvement of a plant acetyltransferase, generates the other known lolines. LolN transforms NANL to norlonine which is monomethylated and dimethylated to respectively lonine and N-methyllonine (NML) by lolM. LolP catalyzes hydroxylation of the methyl group in N-methylloline (NML) and further oxygenation to N-formylloline (NFL). A plant acetyltransferase is responsible for the acetylation of loline to form N-acetylloline (NAL). LolA might interact with aspartate kinase to prevent feedback inhibition of its activity by these end products and thereby promote production of L-homoserine from L-aspartate. The protein is Inactive cytochrome P450 monooxygenase lolP2 of Epichloe uncinata (Endophyte fungus).